A 361-amino-acid chain; its full sequence is Phospho-N-acetylmuramoyl-pentapeptide-transferase (361 aa).

The next 10 membrane-spanning stretches (helical) occupy residues leucine 28 to leucine 48, threonine 74 to leucine 94, isoleucine 99 to alanine 119, serine 133 to aspartate 153, leucine 168 to serine 188, valine 203 to isoleucine 223, threonine 236 to phenylalanine 256, valine 263 to isoleucine 283, isoleucine 288 to valine 308, and lysine 338 to leucine 358.

The protein belongs to the glycosyltransferase 4 family. MraY subfamily. It depends on Mg(2+) as a cofactor.

The protein resides in the cell membrane. It catalyses the reaction UDP-N-acetyl-alpha-D-muramoyl-L-alanyl-gamma-D-glutamyl-meso-2,6-diaminopimeloyl-D-alanyl-D-alanine + di-trans,octa-cis-undecaprenyl phosphate = di-trans,octa-cis-undecaprenyl diphospho-N-acetyl-alpha-D-muramoyl-L-alanyl-D-glutamyl-meso-2,6-diaminopimeloyl-D-alanyl-D-alanine + UMP. It functions in the pathway cell wall biogenesis; peptidoglycan biosynthesis. In terms of biological role, catalyzes the initial step of the lipid cycle reactions in the biosynthesis of the cell wall peptidoglycan: transfers peptidoglycan precursor phospho-MurNAc-pentapeptide from UDP-MurNAc-pentapeptide onto the lipid carrier undecaprenyl phosphate, yielding undecaprenyl-pyrophosphoryl-MurNAc-pentapeptide, known as lipid I. This Rickettsia montanensis protein is Phospho-N-acetylmuramoyl-pentapeptide-transferase.